Consider the following 948-residue polypeptide: Insulin receptor substrate 1 (948 aa).

The PH domain occupies 8-109 (GMALSGYLKK…WLDKLLVLQR (102 aa)). The region spanning 122–236 (YDQVWQVVIQ…SAMSAKTESN (115 aa)) is the IRS-type PTB domain. The interval 247–270 (PDLSHEPMRKRSSSANEASKPINV) is disordered. Phosphoserine is present on residues serine 286 and serine 287. Residues 304 to 329 (RNGTLSESSNQTYFGSNHGLRSNTIS) are compositionally biased toward polar residues. The tract at residues 304–373 (RNGTLSESSN…SDDNGSFSHY (70 aa)) is disordered. Serine 342 carries the post-translational modification Phosphoserine. Position 410 is a phosphotyrosine; by INSR (tyrosine 410). A YXXM motif 1 motif is present at residues 410–413 (YIPM). The interval 528 to 559 (ANRSQSSITKEGTSYSTSSNRQKKSTSAPLLS) is disordered. Residues 529 to 556 (NRSQSSITKEGTSYSTSSNRQKKSTSAP) are compositionally biased toward polar residues. Serine 554 carries the post-translational modification Phosphoserine. Residues 640–643 (YLEM) carry the YXXM motif 2 motif. The disordered stretch occupies residues 703-734 (EKKSNSPLNETPCSLKPTDVESNSHDEHSTNN). The span at 720 to 731 (TDVESNSHDEHS) shows a compositional bias: basic and acidic residues. The residue at position 891 (tyrosine 891) is a Phosphotyrosine; by INSR. The segment at 907-948 (YLKRGSRESPPVSACPGDGNTYAKIDFDQSDSSSSSSNIFNT) is disordered. Phosphoserine occurs at positions 912 and 915. Position 928 is a phosphotyrosine; by INSR (tyrosine 928). Positions 936–948 (SDSSSSSSNIFNT) are enriched in low complexity.

Bindings to phosphatidylinositol 3-kinase and SHP2.

Functionally, activates phosphatidylinositol 3-kinase when bound to the regulatory p85 subunit. May mediate the control of various cellular processes by insulin-like peptides. When phosphorylated by the insulin receptor binds specifically to various cellular proteins containing SH2 domains. Involved in control of cell proliferation, cell size, and body and organ growth throughout development. Also has a role in a signaling pathway controlling the physiological response required to endure periods of low nutrient conditions. Insulin/insulin-like growth factor (IGF) signaling pathway has a role in regulating aging and is necessary in the ovary for vitellogenic maturation. The sequence is that of Insulin receptor substrate 1 from Drosophila erecta (Fruit fly).